Consider the following 120-residue polypeptide: Large ribosomal subunit protein bL12 (120 aa).

The segment covering 95–112 (KEGVSKEEAEEVQGKLEE) has biased composition (basic and acidic residues). Residues 95-120 (KEGVSKEEAEEVQGKLEEAGASVEVK) form a disordered region.

It belongs to the bacterial ribosomal protein bL12 family. As to quaternary structure, homodimer. Part of the ribosomal stalk of the 50S ribosomal subunit. Forms a multimeric L10(L12)X complex, where L10 forms an elongated spine to which 2 to 4 L12 dimers bind in a sequential fashion. Binds GTP-bound translation factors.

In terms of biological role, forms part of the ribosomal stalk which helps the ribosome interact with GTP-bound translation factors. Is thus essential for accurate translation. The chain is Large ribosomal subunit protein bL12 from Oceanobacillus iheyensis (strain DSM 14371 / CIP 107618 / JCM 11309 / KCTC 3954 / HTE831).